The primary structure comprises 556 residues: Endoglucanase 22 (556 aa).

The signal sequence occupies residues 1 to 33 (MSRGRARLQPPPPGTRTTTLAAVLVLVLLAVVA). Asp-108 acts as the Nucleophile in catalysis. Catalysis depends on residues His-450, Asp-502, and Glu-511.

It belongs to the glycosyl hydrolase 9 (cellulase E) family.

Its subcellular location is the secreted. The catalysed reaction is Endohydrolysis of (1-&gt;4)-beta-D-glucosidic linkages in cellulose, lichenin and cereal beta-D-glucans.. The chain is Endoglucanase 22 (GLU11) from Oryza sativa subsp. japonica (Rice).